Here is a 340-residue protein sequence, read N- to C-terminus: Ubiquitin-like domain-containing CTD phosphatase (340 aa).

Residues 24 to 101 form the Ubiquitin-like domain; that stretch reads LTLTVKWNGK…MTMIGTVEDD (78 aa). An FCP1 homology domain is found at 151–312; the sequence is CRQGKKLLVL…VKLTQYLLTI (162 aa). Positions 151 to 312 are phosphatase; the sequence is CRQGKKLLVL…VKLTQYLLTI (162 aa). Mg(2+) is bound by residues D161, D163, and D271.

Requires Mg(2+) as cofactor.

Its subcellular location is the nucleus. The catalysed reaction is O-phospho-L-seryl-[protein] + H2O = L-seryl-[protein] + phosphate. It carries out the reaction O-phospho-L-threonyl-[protein] + H2O = L-threonyl-[protein] + phosphate. Its function is as follows. Dephosphorylates 26S nuclear proteasomes, thereby decreasing their proteolytic activity. The dephosphorylation may prevent assembly of the core and regulatory particles (CP and RP) into mature 26S proteasome. The chain is Ubiquitin-like domain-containing CTD phosphatase from Arabidopsis thaliana (Mouse-ear cress).